Reading from the N-terminus, the 522-residue chain is Glutamate--cysteine ligase, chloroplastic (522 aa).

A chloroplast-targeting transit peptide spans 1–45 (MALMSQAGSSHCIYSEKMKCISGHSSITSNMEMLKMKDICFGNIS). An intrachain disulfide couples cysteine 186 to cysteine 406.

The protein belongs to the carboxylate-amine ligase family. Glutamate--cysteine ligase type 2 subfamily. Homodimer or monomer when oxidized or reduced, respectively. The Cys-186-Cys-406 disulfide bridge is known to modulate the enzyme activity according to the redox status. The oxidized form constitutes the active enzyme.

The protein resides in the plastid. It localises to the chloroplast. It catalyses the reaction L-cysteine + L-glutamate + ATP = gamma-L-glutamyl-L-cysteine + ADP + phosphate + H(+). Its pathway is sulfur metabolism; glutathione biosynthesis; glutathione from L-cysteine and L-glutamate: step 1/2. The chain is Glutamate--cysteine ligase, chloroplastic (GSH1) from Nicotiana tabacum (Common tobacco).